The sequence spans 261 residues: (S)-ureidoglycine aminohydrolase (261 aa).

Positions 184–230 constitute a Cupin type-2 domain; that stretch reads LSFAPGASHGYIETHVQEHGAYILSGQGVYNLDNNWIPVKKGDYIFM. 4 residues coordinate Mn(2+): Glu196, His198, His202, and Gln236. Glu196 is a binding site for substrate. Gln236, Tyr249, and Lys253 together coordinate substrate.

This sequence belongs to the UGHY family. Monomer. Mn(2+) is required as a cofactor.

It is found in the cytoplasm. It carries out the reaction (S)-2-ureidoglycine + H2O = (S)-ureidoglycolate + NH4(+). Functionally, involved in the anaerobic nitrogen utilization via the assimilation of allantoin. Catalyzes the second stereospecific hydrolysis reaction (deamination) of the allantoin degradation pathway, producing S-ureidoglycolate and ammonia from S-ureidoglycine. This Escherichia coli (strain K12) protein is (S)-ureidoglycine aminohydrolase (allE).